Reading from the N-terminus, the 490-residue chain is Protein nucleotidyltransferase YdiU (490 aa).

ATP contacts are provided by Gly94, Gly96, Arg97, Lys117, Asp129, Gly130, Arg180, and Arg187. Asp256 functions as the Proton acceptor in the catalytic mechanism. Mg(2+) contacts are provided by Asn257 and Asp266. Asp266 is a binding site for ATP.

This sequence belongs to the SELO family. It depends on Mg(2+) as a cofactor. Mn(2+) is required as a cofactor.

The enzyme catalyses L-seryl-[protein] + ATP = 3-O-(5'-adenylyl)-L-seryl-[protein] + diphosphate. The catalysed reaction is L-threonyl-[protein] + ATP = 3-O-(5'-adenylyl)-L-threonyl-[protein] + diphosphate. It carries out the reaction L-tyrosyl-[protein] + ATP = O-(5'-adenylyl)-L-tyrosyl-[protein] + diphosphate. It catalyses the reaction L-histidyl-[protein] + UTP = N(tele)-(5'-uridylyl)-L-histidyl-[protein] + diphosphate. The enzyme catalyses L-seryl-[protein] + UTP = O-(5'-uridylyl)-L-seryl-[protein] + diphosphate. The catalysed reaction is L-tyrosyl-[protein] + UTP = O-(5'-uridylyl)-L-tyrosyl-[protein] + diphosphate. In terms of biological role, nucleotidyltransferase involved in the post-translational modification of proteins. It can catalyze the addition of adenosine monophosphate (AMP) or uridine monophosphate (UMP) to a protein, resulting in modifications known as AMPylation and UMPylation. This is Protein nucleotidyltransferase YdiU from Clostridium beijerinckii (strain ATCC 51743 / NCIMB 8052) (Clostridium acetobutylicum).